Consider the following 1066-residue polypeptide: Coiled-coil domain-containing protein 73 (1066 aa).

Coiled coils occupy residues 47-134 and 178-391; these read KAET…QVSQ and LVRE…KTEE. 5 disordered regions span residues 568–600, 719–811, 854–883, 944–978, and 1003–1027; these read LDTR…SNPF, SENS…PKSG, LSPA…PEKT, KNIE…EERN, and VQQS…PGNN. Composition is skewed to polar residues over residues 591-600, 742-781, 789-811, 857-869, and 948-964; these read NTDGSESNPF, RTNT…TSQA, PLTT…PKSG, ATPS…TSAR, and SDPT…SNWS. A compositionally biased stretch (basic and acidic residues) spans 967 to 978; that stretch reads LDPKGQPREERN. The segment covering 1003–1013 has biased composition (polar residues); the sequence is VQQSHSQTVKV.

The chain is Coiled-coil domain-containing protein 73 (Ccdc73) from Mus musculus (Mouse).